The following is a 206-amino-acid chain: Emopamil-binding protein-like (206 aa).

Helical transmembrane passes span 10 to 30 (EAGSSLLLCSALLAVGCALGL), 42 to 62 (WVLAWLCYDSLVHFVLEGAFV), 101 to 121 (LEILTVVLDGLLALVLIYAIV), and 165 to 185 (LWVYLVFFNGLWVLIPGLLLW). The 146-residue stretch at 39–184 (VERWVLAWLC…LWVLIPGLLL (146 aa)) folds into the EXPERA domain.

This sequence belongs to the EBP family. In terms of assembly, homodimer.

Its subcellular location is the endoplasmic reticulum membrane. Its function is as follows. Does not possess sterol isomerase activity and does not bind sigma ligands. This is Emopamil-binding protein-like (Ebpl) from Mus musculus (Mouse).